The primary structure comprises 360 residues: Protein OSB4, chloroplastic (360 aa).

Residues M1 to R61 constitute a chloroplast transit peptide. The segment at S28–E64 is disordered. Positions S33–T43 are enriched in low complexity. Over residues R51–R61 the composition is skewed to basic and acidic residues. The SSB domain occupies I71–E188. 2 PDF region regions span residues W224 to K276 and W296 to P344.

The protein localises to the plastid. The protein resides in the chloroplast. Its function is as follows. Binds single-stranded DNA. The chain is Protein OSB4, chloroplastic (OSB4) from Arabidopsis thaliana (Mouse-ear cress).